A 292-amino-acid chain; its full sequence is Ribosomal protein L11 methyltransferase (292 aa).

Thr144, Gly165, Asp187, and Asn229 together coordinate S-adenosyl-L-methionine.

The protein belongs to the methyltransferase superfamily. PrmA family.

It is found in the cytoplasm. It carries out the reaction L-lysyl-[protein] + 3 S-adenosyl-L-methionine = N(6),N(6),N(6)-trimethyl-L-lysyl-[protein] + 3 S-adenosyl-L-homocysteine + 3 H(+). Methylates ribosomal protein L11. The protein is Ribosomal protein L11 methyltransferase of Pseudomonas savastanoi pv. phaseolicola (strain 1448A / Race 6) (Pseudomonas syringae pv. phaseolicola (strain 1448A / Race 6)).